We begin with the raw amino-acid sequence, 343 residues long: N-acetyl-gamma-glutamyl-phosphate reductase (343 aa).

The active site involves cysteine 147.

It belongs to the NAGSA dehydrogenase family. Type 1 subfamily.

The protein resides in the cytoplasm. The enzyme catalyses N-acetyl-L-glutamate 5-semialdehyde + phosphate + NADP(+) = N-acetyl-L-glutamyl 5-phosphate + NADPH + H(+). It participates in amino-acid biosynthesis; L-arginine biosynthesis; N(2)-acetyl-L-ornithine from L-glutamate: step 3/4. Functionally, catalyzes the NADPH-dependent reduction of N-acetyl-5-glutamyl phosphate to yield N-acetyl-L-glutamate 5-semialdehyde. In Listeria monocytogenes serovar 1/2a (strain ATCC BAA-679 / EGD-e), this protein is N-acetyl-gamma-glutamyl-phosphate reductase.